We begin with the raw amino-acid sequence, 24 residues long: Carboxypeptidase 1 (24 aa).

Residues asparagine 3 and asparagine 11 are each glycosylated (N-linked (GlcNAc...) asparagine).

The protein belongs to the peptidase S10 family. Monomer. In terms of processing, contains both N- and O-linked sugar chains. The N-linked oligosaccharides are unique structures of Man(10)GlcNAc(2) and Man(11)GlcNAc(2). Deglycosylation does neither affect catalytic activity, pH, thermal stability, or resistance to proteolysis of the enzyme.

It is found in the secreted. With respect to regulation, inhibited by DFP. In terms of biological role, removes acidic, neutral and basic amino acids as well as proline from the C-terminal position. Digests preferentially peptides containing a hydrophobic residue in P1' position, as well as arginine, lysine or phenylalanine in P1 position of ester substrate. Catalyzes also peptide synthesis. This Aspergillus niger protein is Carboxypeptidase 1.